The chain runs to 301 residues: Cytosolic sulfotransferase 3 (301 aa).

53–58 provides a ligand contact to 3'-phosphoadenylyl sulfate; that stretch reads KAGTTW. The active-site Proton acceptor is His-115. Residues Arg-137, Ser-145, Tyr-201, 235-240, and 263-265 each bind 3'-phosphoadenylyl sulfate; these read VQFDAM and RKG.

It belongs to the sulfotransferase 1 family.

It localises to the cytoplasm. With respect to regulation, inhibited by Hg(2+), Co(2+), Zn(2+), Cd(2+), Cu(2+) and Pb(2+) ions. Activated slightly by Mn(2+), Ca(2+) and Mg(2+) ions. Functionally, sulfotransferase that utilizes 3'-phospho-5'-adenylyl sulfate (PAPS) as sulfonate donor to catalyze the sulfate conjugation of a variety of xenobiotic and endogenous compounds, including dopamine, T3 (triiodo-L-thyronine), T4 (thyroxine), estrone, DHEA (dehydroepiandrosterone), flavonoids, isoflavonoids and other phenolic compounds. This is Cytosolic sulfotransferase 3 from Danio rerio (Zebrafish).